The primary structure comprises 339 residues: NmrA-like family domain-containing oxidoreductase cpsB (339 aa).

NADP(+) is bound at residue Lys-142.

Belongs to the NmrA-type oxidoreductase family.

The catalysed reaction is didehydrocampesine A + 2 AH2 = campesine A + 2 A. The protein operates within alkaloid biosynthesis. In terms of biological role, oxidoreductase; part of the gene cluster that mediates the biosynthesis of campesine G, a dimeric indole piperazine alkaloid that shows good insecticidal activity Galleria mellonella. Within the pathway, cpsB reduces the unstable (S,S)-trypyl-valyl dihydropiperazine (didehydrocampesine A) intermediate to (S, S)-trypyl-valyl-piperazine (campesine A) using two equivalents of NAD(P)H. The non-canonical non-ribosomal peptide synthetase cpsA catalyzes the first steps of the pathway by producing L-tryptophanal and L-valinal from their respective amino-acids. These products condensate spontaneously to form trypyl-valyl pyrazine also known as didehydrocampesine A. The NmrA-like family domain-containing oxidoreductase cpsB is the next enzyme in cps pathway and reduces the unstable didehydrocampesine A to campesine A. The methyltransferase cpsF and the acetyltransferase cpsE both recognize N13 of piperazine ring to carry out methylation and acetylation of campesine A to produce campesine C and B, respectively. The cytochrome P450 monooxygenase cpsD then acts as a dimerase that catalyzes oxidative heterocoupling between campesine B and C to produce heterodimers with unexpected 6/5/6/6/6/6/5/6 eight-ring scaffold called campesine D. Finally,the cytochrome P450 monooxygenase cpsC is a regioselective dehydrogenase that catalyzes dehydrogenation reaction towards C2-N1 to produce campesine G. This Aspergillus campestris (strain IBT 28561) protein is NmrA-like family domain-containing oxidoreductase cpsB.